Here is a 207-residue protein sequence, read N- to C-terminus: 8-oxoguanine DNA glycosylase/AP lyase (207 aa).

Catalysis depends on residues lysine 128 and aspartate 146.

Belongs to the type-2 OGG1 family.

It catalyses the reaction 2'-deoxyribonucleotide-(2'-deoxyribose 5'-phosphate)-2'-deoxyribonucleotide-DNA = a 3'-end 2'-deoxyribonucleotide-(2,3-dehydro-2,3-deoxyribose 5'-phosphate)-DNA + a 5'-end 5'-phospho-2'-deoxyribonucleoside-DNA + H(+). Functionally, catalyzes the excision of an oxidatively damaged form of guanine (7,8-dihydro-8-oxoguanine = 8-oxoG) from DNA. Also cleaves the DNA backbone at apurinic/apyrimidinic sites (AP sites). This chain is 8-oxoguanine DNA glycosylase/AP lyase, found in Saccharolobus islandicus (strain L.S.2.15 / Lassen #1) (Sulfolobus islandicus).